The chain runs to 352 residues: Ribosomal RNA large subunit methyltransferase M (352 aa).

S-adenosyl-L-methionine-binding positions include S184, 217–220, D236, D256, and D272; that span reads APGG. K301 (proton acceptor) is an active-site residue.

Belongs to the class I-like SAM-binding methyltransferase superfamily. RNA methyltransferase RlmE family. RlmM subfamily. In terms of assembly, monomer.

The protein localises to the cytoplasm. The catalysed reaction is cytidine(2498) in 23S rRNA + S-adenosyl-L-methionine = 2'-O-methylcytidine(2498) in 23S rRNA + S-adenosyl-L-homocysteine + H(+). Functionally, catalyzes the 2'-O-methylation at nucleotide C2498 in 23S rRNA. The chain is Ribosomal RNA large subunit methyltransferase M from Pseudomonas aeruginosa (strain LESB58).